We begin with the raw amino-acid sequence, 816 residues long: MGDTVVEPAPLKPTSEPTSGPPGNNGGSLLSVITEGVGELSVIDPEVAQKACQDVLEKVKLLHGGVAVSSRGAPLELVNGDGVDSEIRCLDDPPAQIREEEDEMGASVASGTAKGARRRRQNNSAKQSWLLRLFESKLFDISMAISYLYNSKEPGVQAYIGNRLFCFRNEDVDFYLPQLLNMYIHMDEDVGDAIKPYIVYRCRQSINFSLQCALLLGAYSSDMHISTQRHSRGTKLRKLILSDELKPAHRKRELPSLSPAPDTGLSPSKRTHQRSKSDATASISLSSNLKRTASNPKVENEDEELSSSTESIDNSFSSPVRLAPEREFIKSLMAIGKRLATLPTKEQKTQRLISELSLLNHKLPARVWLPTAGFDHHVVRVPHTQAVVLNSKDKAPYLIYVEVLECENFDTTSVPARIPENRIRSTRSVENLPECGITHEQRAGSFSTVPNYDNDDEAWSVDDIGELQVELPEVHTNSCDNISQFSVDSITSQESKEPVFIAAGDIRRRLSEQLAHTPTAFKRDPEDPSAVALKEPWQEKVRRIREGSPYGHLPNWRLLSVIVKCGDDLRQELLAFQVLKQLQSIWEQERVPLWIKPYKILVISADSGMIEPVVNAVSIHQVKKQSQLSLLDYFLQEHGSYTTEAFLSAQRNFVQSCAGYCLVCYLLQVKDRHNGNILLDAEGHIIHIDFGFILSSSPRNLGFETSAFKLTTEFVDVMGGLDGDMFNYYKMLMLQGLIAARKHMDKVVQIVEIMQQGSQLPCFHGSSTIRNLKERFHMSMTEEQLQLLVEQMVDGSMRSITTKLYDGFQYLTNGIM.

Disordered regions lie at residues 1–30 (MGDTVVEPAPLKPTSEPTSGPPGNNGGSLL), 99–120 (EEEDEMGASVASGTAKGARRRR), and 248–318 (AHRK…SFSS). Glycine 2 is modified (N-acetylglycine). Positions 2–68 (GDTVVEPAPL…VKLLHGGVAV (67 aa)) are interaction with ACBD3. The region spanning 52–242 (CQDVLEKVKL…GTKLRKLILS (191 aa)) is the PIK helical domain. Serine 258 carries the phosphoserine modification. Threonine 263 carries the phosphothreonine modification. Serine 266, serine 275, serine 277, serine 284, and serine 294 each carry phosphoserine. 2 stretches are compositionally biased toward polar residues: residues 278-297 (DATASISLSSNLKRTASNPK) and 306-318 (SSSTESIDNSFSS). Residue serine 428 is modified to Phosphoserine. At threonine 438 the chain carries Phosphothreonine. Phosphoserine is present on serine 511. Phosphothreonine occurs at positions 517 and 519. In terms of domain architecture, PI3K/PI4K catalytic spans 535–801 (EPWQEKVRRI…MVDGSMRSIT (267 aa)). Residues 541-547 (VRRIREG) are G-loop. Residues 668–676 (QVKDRHNGN) are catalytic loop. An activation loop region spans residues 687 to 711 (HIDFGFILSSSPRNLGFETSAFKLT).

It belongs to the PI3/PI4-kinase family. Type III PI4K subfamily. Interacts with ARF1 and ARF3 in the Golgi complex, but not with ARF4, ARF5 or ARF6. Interacts with NCS1/FREQ in a calcium-independent manner. Interacts with CALN1/CABP8 and CALN2/CABP7; in a calcium-dependent manner; this interaction competes with NCS1/FREQ binding. Interacts with ACBD3. Interacts with ARMH3, YWHAB, YWHAE, YWHAG, YWHAH, YWHAQ, YWHAZ and SFN. Interacts with GGA2 (via VHS domain); the interaction is important for PI4KB location at the Golgi apparatus membrane. Interacts with ATG9A. Requires Mg(2+) as cofactor. The cofactor is Mn(2+).

Its subcellular location is the endomembrane system. The protein localises to the mitochondrion outer membrane. It localises to the rough endoplasmic reticulum membrane. The protein resides in the golgi apparatus. It is found in the golgi apparatus membrane. The enzyme catalyses a 1,2-diacyl-sn-glycero-3-phospho-(1D-myo-inositol) + ATP = a 1,2-diacyl-sn-glycero-3-phospho-(1D-myo-inositol 4-phosphate) + ADP + H(+). Inhibited by wortmannin. Increased kinase activity upon interaction with NCS1/FREQ. Phosphorylates phosphatidylinositol (PI) in the first committed step in the production of the second messenger inositol-1,4,5,-trisphosphate (PIP). May regulate Golgi disintegration/reorganization during mitosis, possibly via its phosphorylation. Involved in Golgi-to-plasma membrane trafficking. The polypeptide is Phosphatidylinositol 4-kinase beta (PI4KB) (Callithrix jacchus (White-tufted-ear marmoset)).